Consider the following 154-residue polypeptide: Urease accessory protein UreE (154 aa).

A disordered region spans residues 135–154; it reads PENGAYHGTGGHHHHHHDHE. Basic residues predominate over residues 144-154; sequence GGHHHHHHDHE.

This sequence belongs to the UreE family.

The protein localises to the cytoplasm. Its function is as follows. Involved in urease metallocenter assembly. Binds nickel. Probably functions as a nickel donor during metallocenter assembly. The protein is Urease accessory protein UreE of Teredinibacter turnerae (strain ATCC 39867 / T7901).